The chain runs to 240 residues: Homeobox protein notochord (240 aa).

A compositionally biased stretch (polar residues) spans 1–13; sequence MSSPAPSGTQVQP. Disordered regions lie at residues 1–21 and 208–240; these read MSSP…PCPG and QKLK…GIGS. The segment at residues 149 to 208 is a DNA-binding region (homeobox); sequence TKRVRTTFNLQQLQELEKVFAKQHNLVGKERAQLAARLHLTENQVRIWFQNRRVKYQKQQ. Over residues 213–225 the composition is skewed to low complexity; it reads PSSSVMEEPSSSS.

The protein resides in the nucleus. Transcription factor that controls node morphogenesis. Acts downstream of both FOXA2 and Brachyury (T) during notochord development. Is essential for cilia formation in the posterior notochord (PNC) and for left-right patterning; acts upstream of FOXJ1 and RFX3 in this process and is required for the expression of various components important for axonemal assembly and function. Plays a role in regulating axial versus paraxial cell fate. Activates the transcription of ciliary proteins C11orf97 homolog, FAM183B and SPACA9 in the embryonic ventral node. This Mus musculus (Mouse) protein is Homeobox protein notochord (Noto).